Consider the following 333-residue polypeptide: Na(+)/H(+) exchange regulatory cofactor NHE-RF1 (333 aa).

One can recognise a PDZ 1 domain in the interval 13–93; sequence LCCMEKGPDG…AVRLLVVQPQ (81 aa). 2 disordered regions span residues 90–164 and 232–333; these read VQPQ…RAVD and LAGP…FSNL. Over residues 97–111 the composition is skewed to basic and acidic residues; it reads QPPKTHSDPDGEAQR. Residues 112–122 are compositionally biased toward low complexity; the sequence is EPPAAETPAAE. The segment covering 124-133 has biased composition (basic and acidic residues); that stretch reads SGPEERELRP. One can recognise a PDZ 2 domain in the interval 135 to 215; that stretch reads LCRIKKGPNG…ETKLLVVGVL (81 aa). Composition is skewed to basic and acidic residues over residues 274–289 and 323–333; these read SETHSEPDTQEGDKRS and WSKKNELFSNL.

The protein resides in the endomembrane system. Its subcellular location is the cell projection. The protein localises to the filopodium. It localises to the ruffle. It is found in the microvillus. Scaffold protein that connects plasma membrane proteins with members of the ezrin/moesin/radixin family and thereby helps to link them to the actin cytoskeleton and to regulate their surface expression. Was first known to play a role in the regulation of the activity and subcellular location of SLC9A3. May enhance Wnt signaling. This Gallus gallus (Chicken) protein is Na(+)/H(+) exchange regulatory cofactor NHE-RF1 (NHERF1).